The sequence spans 314 residues: Olfactory receptor 5P66 (314 aa).

At Met1–Ile28 the chain is on the extracellular side. Residue Asn8 is glycosylated (N-linked (GlcNAc...) asparagine). Residues Val29–Ile49 traverse the membrane as a helical segment. The Cytoplasmic portion of the chain corresponds to Leu50–Gln57. A helical membrane pass occupies residues Leu58–Ser78. At Ser79 to Ile102 the chain is on the extracellular side. Cys100 and Cys192 are joined by a disulfide. Residues Gln103–Tyr123 form a helical membrane-spanning segment. The Cytoplasmic segment spans residues Asp124 to Ser136. The chain crosses the membrane as a helical span at residues Thr137–Leu157. Residues Asn158 to Val199 lie on the Extracellular side of the membrane. The helical transmembrane segment at Val200–Ser220 threads the bilayer. Residues Tyr221 to Ala240 lie on the Cytoplasmic side of the membrane. A helical membrane pass occupies residues Phe241–Ile261. The Extracellular segment spans residues Tyr262–Asn274. Residues Lys275–Leu295 traverse the membrane as a helical segment. The Cytoplasmic portion of the chain corresponds to Arg296–Ser314.

It belongs to the G-protein coupled receptor 1 family.

It is found in the cell membrane. Functionally, potential odorant receptor. This is Olfactory receptor 5P66 from Mus musculus (Mouse).